Consider the following 317-residue polypeptide: Porphobilinogen deaminase (317 aa).

S-(dipyrrolylmethanemethyl)cysteine is present on C242.

Belongs to the HMBS family. In terms of assembly, monomer. Dipyrromethane serves as cofactor.

It carries out the reaction 4 porphobilinogen + H2O = hydroxymethylbilane + 4 NH4(+). It participates in porphyrin-containing compound metabolism; protoporphyrin-IX biosynthesis; coproporphyrinogen-III from 5-aminolevulinate: step 2/4. Tetrapolymerization of the monopyrrole PBG into the hydroxymethylbilane pre-uroporphyrinogen in several discrete steps. The sequence is that of Porphobilinogen deaminase from Colwellia psychrerythraea (strain 34H / ATCC BAA-681) (Vibrio psychroerythus).